Reading from the N-terminus, the 384-residue chain is Putative ankyrin repeat protein L72 (384 aa).

ANK repeat units follow at residues 88-117 (ADMC…NIKN), 119-146 (GNLL…KEFS), 171-200 (DHNV…ILSV), 202-231 (DDSL…DIES), 233-261 (NNYC…NPNN), 298-324 (ILYQ…AGIK), and 325-357 (PTNS…DINV).

This chain is Putative ankyrin repeat protein L72, found in Acanthamoeba polyphaga (Amoeba).